Reading from the N-terminus, the 253-residue chain is Nurim homolog (253 aa).

Topologically, residues 1–2 (MT) are nuclear. A helical transmembrane segment spans residues 3-30 (SIAKSIVLLASLATFAYSLYVVGSLMMF). Residues 31–56 (LSTPRSISKAHTWIFNLLDNKSRLQT) lie on the Perinuclear space side of the membrane. The helical transmembrane segment at 57–78 (AYGPVVFDTLYLIGFIFQHSFL) threads the bilayer. The Nuclear portion of the chain corresponds to 79–96 (KSAVVKKLLAKLGLSGAE). Residues 97–113 (RTIYSLTSSLCLHYLIV) form a helical membrane-spanning segment. Residues 114–132 (NWLPAQSIVLWQIDVEQSA) lie on the Perinuclear space side of the membrane. A helical membrane pass occupies residues 133–161 (PLWWTFVITHGICWVVIFGGSLVMDLPEL). Residues 162–188 (LGVKQAYYDLKAYGPPISYKSGELRNL) are Nuclear-facing. Residues 189-207 (YAHVRHPSFVGLSVILFAT) traverse the membrane as a helical segment. The Perinuclear space segment spans residues 208–213 (NVMSVD). Residues 214–231 (RLVMALLLTTYMYLAWST) form a helical membrane-spanning segment. Residues 232-253 (DQKDVAYQKIQLQRKKLELKAK) are Nuclear-facing.

This sequence belongs to the nurim family.

Its subcellular location is the nucleus inner membrane. The sequence is that of Nurim homolog (nrm) from Drosophila melanogaster (Fruit fly).